The sequence spans 352 residues: Uroporphyrinogen decarboxylase (352 aa).

Substrate-binding positions include 29 to 33 (RQAGR), F48, D78, Y154, S209, and H322.

Belongs to the uroporphyrinogen decarboxylase family. Homodimer.

The protein resides in the cytoplasm. It catalyses the reaction uroporphyrinogen III + 4 H(+) = coproporphyrinogen III + 4 CO2. The protein operates within porphyrin-containing compound metabolism; protoporphyrin-IX biosynthesis; coproporphyrinogen-III from 5-aminolevulinate: step 4/4. Its function is as follows. Catalyzes the decarboxylation of four acetate groups of uroporphyrinogen-III to yield coproporphyrinogen-III. This is Uroporphyrinogen decarboxylase from Bacillus pumilus (strain SAFR-032).